A 150-amino-acid chain; its full sequence is Transcription antitermination protein NusB (150 aa).

Belongs to the NusB family.

Its function is as follows. Involved in transcription antitermination. Required for transcription of ribosomal RNA (rRNA) genes. Binds specifically to the boxA antiterminator sequence of the ribosomal RNA (rrn) operons. This is Transcription antitermination protein NusB from Alcanivorax borkumensis (strain ATCC 700651 / DSM 11573 / NCIMB 13689 / SK2).